We begin with the raw amino-acid sequence, 547 residues long: Cytochrome P450 monooxygenase 128 (547 aa).

Residues Ile9–Ile25 traverse the membrane as a helical segment. Residues Asn336 and Asn438 are each glycosylated (N-linked (GlcNAc...) asparagine). Cys483 is a heme binding site.

Belongs to the cytochrome P450 family. Heme serves as cofactor.

It is found in the membrane. It functions in the pathway secondary metabolite biosynthesis. In terms of biological role, cytochrome P450 monooxygenase that is able to use 7-ethoxycoumarin and testosterone as substrates for oxidation. The sequence is that of Cytochrome P450 monooxygenase 128 from Postia placenta (strain ATCC 44394 / Madison 698-R) (Brown rot fungus).